The chain runs to 292 residues: Elongation factor Ts (292 aa).

The interval 82 to 85 (TDFV) is involved in Mg(2+) ion dislocation from EF-Tu.

This sequence belongs to the EF-Ts family.

The protein resides in the cytoplasm. In terms of biological role, associates with the EF-Tu.GDP complex and induces the exchange of GDP to GTP. It remains bound to the aminoacyl-tRNA.EF-Tu.GTP complex up to the GTP hydrolysis stage on the ribosome. The protein is Elongation factor Ts of Legionella pneumophila subsp. pneumophila (strain Philadelphia 1 / ATCC 33152 / DSM 7513).